We begin with the raw amino-acid sequence, 197 residues long: dITP/XTP pyrophosphatase (197 aa).

8–13 (TGNPGK) is a substrate binding site. Mg(2+) is bound by residues E40 and D69. The active-site Proton acceptor is D69. Residues S70, 154–157 (FGYD), K177, and 182–183 (HR) contribute to the substrate site.

The protein belongs to the HAM1 NTPase family. As to quaternary structure, homodimer. Mg(2+) is required as a cofactor.

The enzyme catalyses XTP + H2O = XMP + diphosphate + H(+). The catalysed reaction is dITP + H2O = dIMP + diphosphate + H(+). It carries out the reaction ITP + H2O = IMP + diphosphate + H(+). Functionally, pyrophosphatase that catalyzes the hydrolysis of nucleoside triphosphates to their monophosphate derivatives, with a high preference for the non-canonical purine nucleotides XTP (xanthosine triphosphate), dITP (deoxyinosine triphosphate) and ITP. Seems to function as a house-cleaning enzyme that removes non-canonical purine nucleotides from the nucleotide pool, thus preventing their incorporation into DNA/RNA and avoiding chromosomal lesions. This chain is dITP/XTP pyrophosphatase, found in Yersinia pestis.